The chain runs to 694 residues: Frizzled-2 (694 aa).

Residues M1–A22 form the signal peptide. The Extracellular portion of the chain corresponds to D23–D315. One can recognise an FZ domain in the interval D59–Q180. Intrachain disulfides connect C64-C125, C72-C118, C109-C147, C136-C177, and C140-C164. Residue N78 is glycosylated (N-linked (GlcNAc...) asparagine). The disordered stretch occupies residues N175–C253. Residues G187–S224 show a composition bias toward gly residues. N288 carries N-linked (GlcNAc...) asparagine glycosylation. Residues F316–L336 traverse the membrane as a helical segment. The Cytoplasmic segment spans residues T337–P352. A helical transmembrane segment spans residues I353–L373. Residues Q374–L397 are Extracellular-facing. A helical transmembrane segment spans residues V398–F418. Residues T419–Y439 lie on the Cytoplasmic side of the membrane. A helical transmembrane segment spans residues F440 to A460. The Extracellular portion of the chain corresponds to V461–T482. A helical transmembrane segment spans residues F483–F503. At V504 to R534 the chain is on the cytoplasmic side. A helical transmembrane segment spans residues I535 to Y555. Residues E556 to S584 are Extracellular-facing. The helical transmembrane segment at V585–W605 threads the bilayer. Residues S606–V694 lie on the Cytoplasmic side of the membrane. The Lys-Thr-X-X-X-Trp motif, mediates interaction with the PDZ domain of Dvl family members signature appears at K608–W613. The short motif at S692–V694 is the PDZ-binding element.

The protein belongs to the G-protein coupled receptor Fz/Smo family. In terms of assembly, interacts with ATP6AP2.

The protein resides in the cell membrane. Receptor for Wnt proteins. Most of frizzled receptors are coupled to the beta-catenin canonical signaling pathway, which leads to the activation of disheveled proteins, inhibition of GSK-3 kinase, nuclear accumulation of beta-catenin and activation of Wnt target genes. A second signaling pathway involving PKC and calcium fluxes has been seen for some family members, but it is not yet clear if it represents a distinct pathway or if it can be integrated in the canonical pathway, as PKC seems to be required for Wnt-mediated inactivation of GSK-3 kinase. Both pathways seem to involve interactions with G-proteins. Required to coordinate the cytoskeletons of epidermal cells to produce a parallel array of cuticular hairs and bristles. The chain is Frizzled-2 (fz2) from Drosophila melanogaster (Fruit fly).